The primary structure comprises 297 residues: Calponin-1 (297 aa).

Positions 28 to 131 constitute a Calponin-homology (CH) domain; sequence HQREQELREW…STLLALASMA (104 aa). Calponin-like repeat units follow at residues 164–189, 204–229, and 243–268; these read IGLQMGTNKFASQQGMTAYGTRRHLY, ISLQMGTNKGASQAGMTAPGTKRQIF, and VSLQMGSNKGASQRGMTVYGLPRQVY. Position 170 is a phosphothreonine; by ROCK2 (Thr-170). The residue at position 175 (Ser-175) is a Phosphoserine; by ROCK2. Phosphothreonine; by ROCK2 occurs at positions 180 and 184. Thr-259 bears the Phosphothreonine; by ROCK2 mark.

The protein belongs to the calponin family. As to quaternary structure, part of cGMP kinase signaling complex at least composed of ACTA2/alpha-actin, CNN1/calponin H1, PLN/phospholamban, PRKG1 and ITPR1. In terms of tissue distribution, smooth muscle, and tissues containing significant amounts of smooth muscle.

In terms of biological role, thin filament-associated protein that is implicated in the regulation and modulation of smooth muscle contraction. It is capable of binding to actin, calmodulin and tropomyosin. The interaction of calponin with actin inhibits the actomyosin Mg-ATPase activity. In Mus musculus (Mouse), this protein is Calponin-1 (Cnn1).